Consider the following 61-residue polypeptide: MTEKDSFKKRILFFFFIFFTLFLFNIPKKKKKKIKKNKTTSKSNSNVYGEKKIFKKKKSDI.

The chain crosses the membrane as a helical span at residues 10–27; the sequence is RILFFFFIFFTLFLFNIP.

The protein resides in the membrane. This is an uncharacterized protein from Dictyostelium discoideum (Social amoeba).